Here is a 197-residue protein sequence, read N- to C-terminus: Phospholipid hydroperoxide glutathione peroxidase (197 aa).

S40 is modified (phosphoserine). The active site involves U73. A non-standard amino acid (selenocysteine) is located at residue U73.

Belongs to the glutathione peroxidase family. Monomer. Has a tendency to form higher mass oligomers. Interacts with FUNDC1; this interaction promotes GPX4 recruitment into mitochondria through TOM/TIM complex where it is degraded by mitophagy.

Its subcellular location is the mitochondrion. It is found in the cytoplasm. It catalyses the reaction a hydroperoxy polyunsaturated fatty acid + 2 glutathione = a hydroxy polyunsaturated fatty acid + glutathione disulfide + H2O. The catalysed reaction is 2 glutathione + H2O2 = glutathione disulfide + 2 H2O. The enzyme catalyses tert-butyl hydroperoxide + 2 glutathione = tert-butanol + glutathione disulfide + H2O. It carries out the reaction cumene hydroperoxide + 2 glutathione = 2-phenylpropan-2-ol + glutathione disulfide + H2O. It catalyses the reaction (9S)-hydroperoxy-(10E,12Z)-octadecadienoate + 2 glutathione = (9S)-hydroxy-(10E,12Z)-octadecadienoate + glutathione disulfide + H2O. The catalysed reaction is (13S)-hydroperoxy-(9Z,11E)-octadecadienoate + 2 glutathione = (13S)-hydroxy-(9Z,11E)-octadecadienoate + glutathione disulfide + H2O. The enzyme catalyses (5S)-hydroperoxy-(6E,8Z,11Z,14Z)-eicosatetraenoate + 2 glutathione = (5S)-hydroxy-(6E,8Z,11Z,14Z)-eicosatetraenoate + glutathione disulfide + H2O. It carries out the reaction (12R)-hydroperoxy-(5Z,8Z,10E,14Z)-eicosatetraenoate + 2 glutathione = (12R)-hydroxy-(5Z,8Z,10E,14Z)-eicosatetraenoate + glutathione disulfide + H2O. It catalyses the reaction (12S)-hydroperoxy-(5Z,8Z,10E,14Z)-eicosatetraenoate + 2 glutathione = (12S)-hydroxy-(5Z,8Z,10E,14Z)-eicosatetraenoate + glutathione disulfide + H2O. The catalysed reaction is (15S)-hydroperoxy-(5Z,8Z,11Z,13E)-eicosatetraenoate + 2 glutathione = (15S)-hydroxy-(5Z,8Z,11Z,13E)-eicosatetraenoate + glutathione disulfide + H2O. The enzyme catalyses (5S)-hydroperoxy-(6E,8Z,11Z,14Z,17Z)-eicosapentaenoate + 2 glutathione = (5S)-hydroxy-(6E,8Z,11Z,14Z,17Z)-eicosapentaenoate + glutathione disulfide + H2O. It carries out the reaction (12S)-hydroperoxy-(5Z,8Z,10E,14Z,17Z)-eicosapentaenoate + 2 glutathione = (12S)-hydroxy-(5Z,8Z,10E,14Z,17Z)-eicosapentaenoate + glutathione disulfide + H2O. It catalyses the reaction (15S)-hydroperoxy-(5Z,8Z,11Z,13E,17Z)-eicosapentaenoate + 2 glutathione = (15S)-hydroxy-(5Z,8Z,11Z,13E,17Z)-eicosapentaenoate + glutathione disulfide + H2O. The catalysed reaction is (15S)-hydroperoxy-(11Z,13E)-eicosadienoate + 2 glutathione = (15S)-hydroxy-(11Z,13E)-eicosadienoate + glutathione disulfide + H2O. The enzyme catalyses (17S)-hydroperoxy-(4Z,7Z,10Z,13Z,15E,19Z)-docosahexaenoate + 2 glutathione = (17S)-hydroxy-(4Z,7Z,10Z,13Z,15E,19Z)-docosahexaenoate + glutathione disulfide + H2O. It carries out the reaction a hydroperoxy-1,2-diacyl-glycero-3-phosphocholine + 2 glutathione = a hydroxy-1,2-diacyl-glycero-3-phosphocholine + glutathione disulfide + H2O. In terms of biological role, essential antioxidant peroxidase that directly reduces phospholipid hydroperoxide even if they are incorporated in membranes and lipoproteins. Can also reduce fatty acid hydroperoxide, cholesterol hydroperoxide and thymine hydroperoxide. Plays a key role in protecting cells from oxidative damage by preventing membrane lipid peroxidation. Required to prevent cells from ferroptosis, a non-apoptotic cell death resulting from an iron-dependent accumulation of lipid reactive oxygen species. The presence of selenocysteine (Sec) versus Cys at the active site is essential for life: it provides resistance to overoxidation and prevents cells against ferroptosis. The presence of Sec at the active site is also essential for the survival of a specific type of parvalbumin-positive interneurons, thereby preventing against fatal epileptic seizures. May be required to protect cells from the toxicity of ingested lipid hydroperoxides. Required for normal sperm development and male fertility. Essential for maturation and survival of photoreceptor cells. Plays a role in a primary T-cell response to viral and parasitic infection by protecting T-cells from ferroptosis and by supporting T-cell expansion. Plays a role of glutathione peroxidase in platelets in the arachidonic acid metabolism. Reduces hydroperoxy ester lipids formed by a 15-lipoxygenase that may play a role as down-regulator of the cellular 15-lipoxygenase pathway. Can also reduce small soluble hydroperoxides such as H2O2, cumene hydroperoxide and tert-butyl hydroperoxide. The protein is Phospholipid hydroperoxide glutathione peroxidase of Pongo pygmaeus (Bornean orangutan).